A 729-amino-acid chain; its full sequence is MSLFGTSPDDPSMGDSVHQRSRSSLFADEPLPGGAGAGNSANLGSSSLFADDDGFQSSSPWNSNANKRAARHELVKTLLPDADVPESYIDAYDLVLNEGDRVGGVVGLTSVREILSSSGLSASDQAKIFNLVVSGDGDSANGLGRGQFNVLLALIGLAQEGEDLTFDAVDDRRKKLPLPKSSYLDRLRDRQQPSAPSHPEERPTTPPPPPAAINDPPSARSRQSRETLGGLDADPWGSPQLHRGHNHVQTEPEPPVLNGFGSVRSATNAWSSGAGEDETQHEVPSGLRANGRTDGAPSTSSGSGWGGSYRNTTAGDGFGGPIRAGLGNLGAPSSGQEEPNARRRLGIGISTSSQVEETVTVNLLPEKEGMFMFQHRNYEVKSSRRGSTVIRRYSDFVWLLDCLQKRYPFRQLPLLPPKRIAADSNSFLEKRRRGLVRFTNALVRHPVLSQEQLVVMFLTVPTELSVWRKQATISVQDEFTGRVLPPDLEDSLPANLTDIFETVRSGVKRSAEIYINLCTLLERLAKRNEGLAADHLRFSLALQSLTEVTKDTYAVDTNDVPILNEGIMATARHLSNSQSLLEDEARAWENGILEDLKFQRDCLVSVREMFDRRDRYARNNIPQLERRIESNERKLEELRTRPQGAVKPGEIEKVEESIFKDKESIVQQHARGVFIKECIRDELVHFQRSQYHISRLHQDWSQERVKYSELQADNWRSLSDQVEGMPLGE.

Disordered regions lie at residues 1-43 (MSLF…SANL) and 177-340 (PLPK…EEPN). Positions 356-464 (EETVTVNLLP…VMFLTVPTEL (109 aa)) constitute a PX domain. Residues R392, S394, K418, and R431 each coordinate a 1,2-diacyl-sn-glycero-3-phospho-(1D-myo-inositol-3-phosphate).

It belongs to the sorting nexin family.

The protein resides in the cytoplasm. It is found in the membrane. In terms of biological role, required for vacuolar protein sorting. This Aspergillus fumigatus (strain ATCC MYA-4609 / CBS 101355 / FGSC A1100 / Af293) (Neosartorya fumigata) protein is Sorting nexin mvp1 (mvp1).